Here is a 122-residue protein sequence, read N- to C-terminus: Large ribosomal subunit protein uL14c (122 aa).

Belongs to the universal ribosomal protein uL14 family. Part of the 50S ribosomal subunit.

Its subcellular location is the plastid. It is found in the chloroplast. In terms of biological role, binds to 23S rRNA. The protein is Large ribosomal subunit protein uL14c of Chlorella vulgaris (Green alga).